Reading from the N-terminus, the 536-residue chain is MSKRPNFLVIVADDLGFSDIGAFGGEIATPNLDALAIAGLRLTDFHTASTCSPTRSMLLTGTDHHIAGIGTMAEALTPELEGKPGYEGHLNERVVALPELLREAGYQTLMAGKWHLGLKPEQTPHARGFERSFSLLPGAANHYGFEPPYDESTPRILKGTPALYVEDERYLDTLPEGFYSSDAFGDKLLQYLKERDQSRPFFAYLPFSAPHWPLQAPREIVEKYRGRYDAGPEALRQERLARLKELGLVEADVEAHPVLALTREWEALEDEERAKSARAMEVYAAMVERMDWNIGRVVDYLRRQGELDNTFVLFMSDNGAEGALLEAFPKFGPDLLGFLDRHYDNSLENIGRANSYVWYGPRWAQAATAPSRLYKAFTTQGGIRVPALVRYPRLSRQGAISHAFATVMDVTPTLLDLAGVRHPGKRWRGREIAEPRGRSWLGWLSGETEAAHDENTVTGWELFGMRAIRQGDWKAVYLPAPVGPATWQLYDLARDPGEIHDLADSQPGKLAELIEHWKRYVSETGVVEGASPFLVR.

Asp13, Asp14, and Cys51 together coordinate Ca(2+). Catalysis depends on Cys51, which acts as the Nucleophile. A 3-oxoalanine (Cys) modification is found at Cys51. His115 is an active-site residue. Positions 317 and 318 each coordinate Ca(2+).

Belongs to the sulfatase family. In terms of assembly, monomer. Ca(2+) serves as cofactor. The conversion to 3-oxoalanine (also known as C-formylglycine, FGly), of a serine or cysteine residue in prokaryotes and of a cysteine residue in eukaryotes, is critical for catalytic activity.

Its subcellular location is the cytoplasm. The catalysed reaction is an aryl sulfate + H2O = a phenol + sulfate + H(+). Functionally, hydrolyzes the bond between sulfate and the aromatic ring in a compound such as 4-nitrocatechol sulfate. The protein is Arylsulfatase (atsA) of Pseudomonas aeruginosa (strain ATCC 15692 / DSM 22644 / CIP 104116 / JCM 14847 / LMG 12228 / 1C / PRS 101 / PAO1).